A 239-amino-acid chain; its full sequence is Immunoglobulin superfamily member 23 (239 aa).

A disordered region spans residues 63–93 (ELEAQPPTSSSPKGLPGRPRTSQEVPNAEDN). Residues 94–179 (PSLIPLVTFP…ELVSEPVTVS (86 aa)) form the Ig-like domain. Residues 214-234 (LIVAATIGGLVLIGSVCFYIL) form a helical membrane-spanning segment.

It is found in the cell membrane. In terms of biological role, may be involved in osteoclast differentiation. In Mus musculus (Mouse), this protein is Immunoglobulin superfamily member 23.